The primary structure comprises 341 residues: Fructose-1,6-bisphosphatase, cytosolic (341 aa).

The Mg(2+) site is built by Glu-71, Glu-100, Asp-121, Leu-123, and Asp-124. Substrate contacts are provided by residues 124-127 (DGSF), Asn-215, Tyr-247, Tyr-267, and Lys-277. Glu-283 contacts Mg(2+).

The protein belongs to the FBPase class 1 family. Mg(2+) serves as cofactor.

Its subcellular location is the cytoplasm. The enzyme catalyses beta-D-fructose 1,6-bisphosphate + H2O = beta-D-fructose 6-phosphate + phosphate. The protein is Fructose-1,6-bisphosphatase, cytosolic of Pisum sativum (Garden pea).